We begin with the raw amino-acid sequence, 765 residues long: Palmitoyltransferase ZDHHC8 (765 aa).

Residues 1-13 (MPRSPGTRLKPAK) lie on the Cytoplasmic side of the membrane. A helical membrane pass occupies residues 14–34 (YIPVATAAALLVGSSTLFFVF). Over 35–52 (TCPWLTRAVSPAVPVYNG) the chain is Lumenal. Residues 53–73 (IIFLFVLANFSMATFMDPGVF) traverse the membrane as a helical segment. Residues 74 to 148 (PRADEDEDKE…NCIGRRNYRY (75 aa)) lie on the Cytoplasmic side of the membrane. In terms of domain architecture, DHHC spans 104–154 (KWCATCHFYRPPRCSHCSVCDNCVEDFDHHCPWVNNCIGRRNYRYFFLFLL). Cysteine 134 functions as the S-palmitoyl cysteine intermediate in the catalytic mechanism. Residues 149-169 (FFLFLLSLSAHMVGVVAFGLV) form a helical membrane-spanning segment. Residues 170–190 (YVLNHAEGLGAAHTTITMAVM) are Lumenal-facing. The helical transmembrane segment at 191–211 (CVAGLFFIPVIGLTGFHVVLV) threads the bilayer. Residues 212–765 (TRGRTTNEQV…VGGTTYEISV (554 aa)) lie on the Cytoplasmic side of the membrane. A disordered region spans residues 293 to 352 (GLGRSKSKGSLDRLDEKPLDLGPPLPPKIEAGTFSSDLQTPRPGSAESALSVQRTSPPTP). Basic and acidic residues predominate over residues 301 to 311 (GSLDRLDEKPL). Residue serine 337 is modified to Phosphoserine. The residue at position 441 (arginine 441) is an Omega-N-methylarginine. Positions 509–540 (LHPGATGDPPRPLPRSFSPVLGPRPREPSPVR) are disordered. Phosphoserine occurs at positions 606, 627, 675, 682, 725, and 743. The disordered stretch occupies residues 613-747 (GPGFGGARNP…PGPSASPTRH (135 aa)). Positions 622–653 (PALQTSLSSLSSSVSRAPRTSSSSLQADQASS) are enriched in low complexity.

Belongs to the DHHC palmitoyltransferase family. ERF2/ZDHHC9 subfamily. In terms of tissue distribution, widely expressed.

Its subcellular location is the golgi apparatus membrane. It localises to the mitochondrion membrane. The enzyme catalyses L-cysteinyl-[protein] + hexadecanoyl-CoA = S-hexadecanoyl-L-cysteinyl-[protein] + CoA. In terms of biological role, palmitoyltransferase that catalyzes the addition of palmitate onto various protein substrates and therefore functions in several unrelated biological processes. Through the palmitoylation of ABCA1 regulates the localization of the transporter to the plasma membrane and thereby regulates its function in cholesterol and phospholipid efflux. Could also pamitoylate the D(2) dopamine receptor DRD2 and regulate its stability and localization to the plasma membrane. Could also play a role in glutamatergic transmission. Functionally, (Microbial infection) Able to palmitoylate SARS coronavirus-2/SARS-CoV-2 spike protein following its synthesis in the endoplasmic reticulum (ER). In the infected cell, promotes spike biogenesis by protecting it from premature ER degradation, increases half-life and controls the lipid organization of its immediate membrane environment. Once the virus has formed, spike palmitoylation controls fusion with the target cell. This Homo sapiens (Human) protein is Palmitoyltransferase ZDHHC8.